Reading from the N-terminus, the 756-residue chain is Hyperosmolality-gated Ca2+ permeable channel 1.5 (756 aa).

10 helical membrane-spanning segments follow: residues 7–27, 101–121, 154–174, 373–393, 425–445, 465–485, 510–530, 574–594, 628–648, and 651–671; these read IGVAATINILTAFAFFIAFAI, IYLLGLKIFFPIACIAFTVMV, SRFWVHLCMAYVITFWTCFVL, LVIAVAFFFLTFFFMIPIAFV, FLPGIALKIFLIVLPSILMLM, YYMFQFINVFLCSIIAGTALQ, ATFFITYIMVDGWAGVAGEIL, FILGLVYAAVSPILLPFILVF, VVIALIVSQLLLMGLLSTKKA, and STPLLFILPVLTIGFHKFCQG. The interval 731–756 is disordered; sequence PDKTPDLVATKRGSRRFNSGSAETFT. The segment covering 746–756 has biased composition (polar residues); that stretch reads RFNSGSAETFT.

This sequence belongs to the CSC1 (TC 1.A.17) family.

The protein localises to the membrane. Acts as an osmosensitive calcium-permeable cation channel. The sequence is that of Hyperosmolality-gated Ca2+ permeable channel 1.5 from Arabidopsis thaliana (Mouse-ear cress).